A 456-amino-acid polypeptide reads, in one-letter code: Alcohol acyltransferase 1 (456 aa).

Active-site proton acceptor residues include His166 and Asp382.

This sequence belongs to the plant acyltransferase family. Expressed in fruit.

It carries out the reaction 3-(methylsulfanyl)propanoyl-CoA + butan-1-ol = butyl 3-(methylsulfanyl)propanoate + CoA. The enzyme catalyses ethanol + benzoyl-CoA = ethyl benzoate + CoA. The catalysed reaction is butan-1-ol + benzoyl-CoA = butyl benzoate + CoA. It catalyses the reaction 2-(methylsulfanyl)acetyl-CoA + butan-1-ol = butyl 2-(methylsulfanyl)acetate + CoA. Involved in the biosynthesis of volatile esters which confer kiwifruit flavor. Alcohol acyl transferase that can use a wide range of alcohols as substrate to produce esters. Exhibits benzoyl-CoA:alcohol O-acyltransferase activity. This Actinidia deliciosa (Kiwi) protein is Alcohol acyltransferase 1.